The chain runs to 252 residues: 3-dehydroquinate dehydratase (252 aa).

3-dehydroquinate-binding positions include serine 21, 46–48 (EWR), and arginine 82. Histidine 143 functions as the Proton donor/acceptor in the catalytic mechanism. Lysine 170 serves as the catalytic Schiff-base intermediate with substrate. Residues arginine 213, serine 232, and glutamine 236 each coordinate 3-dehydroquinate.

This sequence belongs to the type-I 3-dehydroquinase family. As to quaternary structure, homodimer.

It carries out the reaction 3-dehydroquinate = 3-dehydroshikimate + H2O. It functions in the pathway metabolic intermediate biosynthesis; chorismate biosynthesis; chorismate from D-erythrose 4-phosphate and phosphoenolpyruvate: step 3/7. In terms of biological role, involved in the third step of the chorismate pathway, which leads to the biosynthesis of aromatic amino acids. Catalyzes the cis-dehydration of 3-dehydroquinate (DHQ) and introduces the first double bond of the aromatic ring to yield 3-dehydroshikimate. This chain is 3-dehydroquinate dehydratase, found in Escherichia coli O127:H6 (strain E2348/69 / EPEC).